Reading from the N-terminus, the 446-residue chain is Phosphoglucosamine mutase (446 aa).

Ser99 acts as the Phosphoserine intermediate in catalysis. Ser99, Asp242, Asp244, and Asp246 together coordinate Mg(2+). The residue at position 99 (Ser99) is a Phosphoserine.

Belongs to the phosphohexose mutase family. The cofactor is Mg(2+). In terms of processing, activated by phosphorylation.

The catalysed reaction is alpha-D-glucosamine 1-phosphate = D-glucosamine 6-phosphate. Functionally, catalyzes the conversion of glucosamine-6-phosphate to glucosamine-1-phosphate. The sequence is that of Phosphoglucosamine mutase from Campylobacter concisus (strain 13826).